A 476-amino-acid chain; its full sequence is MSGARCRTLYPFSGERHGQGLRFAAGELITLLQVPDGGWWEGEKEDGLRGWFPASYVQLLEKPGMVPPPPGEESQTVILPPGWQSYLSPQGRRYYVNTTTNETTWERPSSSPGIPASPGSHRSSLPPTVNGYHASGTPAHPPETAHMSVRKSTGDSQNLGSSSPSKKQSKENTITINCVTFPHPDTMPEQQLLKPTEWSYCDYFWADKKDPQGNGTVAGFELLLQKQLKGKQMQKEMSEFIRERIKIEEDYAKNLAKLSQNSLASQEEGSLGEAWAQVKKSLADEAEVHLKFSAKLHSEVEKPLMNFRENFKKDMKKCDHHIADLRKQLASRYASVEKARKALTERQRDLEMKTQQLEIKLSNKTEEDIKKARRKSTQAGDDLMRCVDLYNQAQSKWFEEMVTTTLELERLEVERVEMIRQHLCQYTQLRHETDMFNQSTVEPVDQLLRKVDPAKDRELWVREHKTGNIRPVDMEI.

One can recognise an SH3 domain in the interval 1–62 (MSGARCRTLY…PASYVQLLEK (62 aa)). In terms of domain architecture, WW spans 77–110 (VILPPGWQSYLSPQGRRYYVNTTTNETTWERPSS). The segment at 100–171 (TNETTWERPS…SSPSKKQSKE (72 aa)) is disordered. The span at 108-120 (PSSSPGIPASPGS) shows a compositional bias: low complexity. Residues S117 and S163 each carry the phosphoserine modification. A compositionally biased stretch (polar residues) spans 150–171 (RKSTGDSQNLGSSSPSKKQSKE). The region spanning 196–456 (TEWSYCDYFW…LLRKVDPAKD (261 aa)) is the F-BAR domain. Residues 309–419 (ENFKKDMKKC…RLEVERVEMI (111 aa)) are a coiled coil.

The protein resides in the cytoplasm. Functionally, may play a role in promoting maturation and morphological differentiation of cerebellar neurons. In Homo sapiens (Human), this protein is Growth arrest-specific protein 7 (GAS7).